The sequence spans 535 residues: cAMP-regulated D2 protein (535 aa).

The first 20 residues, 1–20 (MNKLLVFILLLLLLINISFA), serve as a signal peptide directing secretion. A disulfide bridge links C89 with C109. Residue S213 is the Acyl-ester intermediate of the active site. A disulfide bridge links C265 with C272. Residues E338 and H440 each act as charge relay system in the active site. N-linked (GlcNAc...) asparagine glycosylation is present at N500.

The protein belongs to the type-B carboxylesterase/lipase family.

The protein localises to the cytoplasmic vesicle. The protein resides in the esterosome membrane. This is cAMP-regulated D2 protein (D2) from Dictyostelium discoideum (Social amoeba).